The sequence spans 2604 residues: BEACH domain-containing protein B (2604 aa).

The 152-residue stretch at 1761–1912 folds into the BEACH-type PH domain; the sequence is VGTSEVLTSV…NAKEVGMLIV (152 aa). The BEACH domain maps to 1936–2226; sequence DRRIAMEMAE…QIFRKKHPRR (291 aa). WD repeat units lie at residues 2254–2293, 2368–2407, 2433–2474, 2476–2515, 2516–2557, and 2558–2596; these read HSPS…SGGN, HHKD…TPEK, GHDD…RSLK, PSGS…LASS, ESNG…KRYN, and GAGK…HRKP.

May be involved in the suppression of BCHC1 activity. This Arabidopsis thaliana (Mouse-ear cress) protein is BEACH domain-containing protein B.